Consider the following 150-residue polypeptide: MQLEPNFWQTKSLLEMTESEWEALCDGCGKCCYRKYIQGRGKRQKLYYTRIACNLLDLETGKCGNYSERFNIETDCTKLTKKNLPDFHWLPDTCAYRLLYEGKTLPEWHPLISGSPHSVKNADILIKNGIHERDVIDWFEFIIDEDHTFK.

Belongs to the UPF0260 family.

The sequence is that of UPF0260 protein CGSHiGG_00425 from Haemophilus influenzae (strain PittGG).